The chain runs to 271 residues: Cytosolic Fe-S cluster assembly factor NUBP2 (271 aa).

N-acetylmethionine is present on Met-1. 22 to 29 provides a ligand contact to ATP; sequence GKGGVGKS. Cys-196 and Cys-199 together coordinate [4Fe-4S] cluster.

The protein belongs to the Mrp/NBP35 ATP-binding proteins family. NUBP2/CFD1 subfamily. As to quaternary structure, heterotetramer of 2 NUBP1 and 2 NUBP2 chains. Interacts with KIFC1. Interacts with NUBP1. The cofactor is [4Fe-4S] cluster. As to expression, widely expressed with highest expression in skeletal muscle.

The protein resides in the nucleus. Its subcellular location is the cytoplasm. The protein localises to the cytoskeleton. It is found in the microtubule organizing center. It localises to the centrosome. The protein resides in the cilium axoneme. Its subcellular location is the centriole. Component of the cytosolic iron-sulfur (Fe/S) protein assembly (CIA) machinery. Required for maturation of extramitochondrial Fe-S proteins. The NUBP1-NUBP2 heterotetramer forms a Fe-S scaffold complex, mediating the de novo assembly of an Fe-S cluster and its transfer to target apoproteins. Negatively regulates cilium formation and structure. The chain is Cytosolic Fe-S cluster assembly factor NUBP2 from Homo sapiens (Human).